The following is a 118-amino-acid chain: Large ribosomal subunit protein bL20 (118 aa).

Belongs to the bacterial ribosomal protein bL20 family.

Functionally, binds directly to 23S ribosomal RNA and is necessary for the in vitro assembly process of the 50S ribosomal subunit. It is not involved in the protein synthesizing functions of that subunit. The sequence is that of Large ribosomal subunit protein bL20 from Edwardsiella ictaluri (strain 93-146).